A 705-amino-acid polypeptide reads, in one-letter code: Ion-translocating oxidoreductase complex subunit C (705 aa).

2 consecutive 4Fe-4S ferredoxin-type domains span residues 368 to 397 (MGET…QQLY) and 407 to 435 (KATA…LVQY). Cysteine 377, cysteine 380, cysteine 383, cysteine 387, cysteine 416, cysteine 419, cysteine 422, and cysteine 426 together coordinate [4Fe-4S] cluster. A disordered region spans residues 536 to 684 (RARQAENIPA…EPVDPRKAAV (149 aa)).

This sequence belongs to the 4Fe4S bacterial-type ferredoxin family. RnfC subfamily. In terms of assembly, the complex is composed of six subunits: RnfA, RnfB, RnfC, RnfD, RnfE and RnfG. [4Fe-4S] cluster is required as a cofactor.

It localises to the cell inner membrane. Its function is as follows. Part of a membrane-bound complex that couples electron transfer with translocation of ions across the membrane. This is Ion-translocating oxidoreductase complex subunit C from Citrobacter koseri (strain ATCC BAA-895 / CDC 4225-83 / SGSC4696).